We begin with the raw amino-acid sequence, 194 residues long: MEKLKRKIAEQGTVLSDEVLKVDSFLNHQIDPELMLAVGEEFASLFREEGVTKIVTIESSGIAPAVMAGLKLGVPVVFARKRQSLTLTENLLTASVYSFTKKTESTVAVSASHLSKDDKVLIIDDFLANGQAAKGLVSIIEQAGAKVCGIGIVIEKSFQTGREELENLGIRVESLARIASLAGGKVTFLQEVGS.

Residues leucine 20 and asparagine 27 each coordinate xanthine. 128-132 (ANGQA) contacts 5-phospho-alpha-D-ribose 1-diphosphate. Lysine 156 serves as a coordination point for xanthine.

The protein belongs to the purine/pyrimidine phosphoribosyltransferase family. Xpt subfamily. Homodimer.

It is found in the cytoplasm. It carries out the reaction XMP + diphosphate = xanthine + 5-phospho-alpha-D-ribose 1-diphosphate. It participates in purine metabolism; XMP biosynthesis via salvage pathway; XMP from xanthine: step 1/1. Its function is as follows. Converts the preformed base xanthine, a product of nucleic acid breakdown, to xanthosine 5'-monophosphate (XMP), so it can be reused for RNA or DNA synthesis. This is Xanthine phosphoribosyltransferase from Bacillus licheniformis (strain ATCC 14580 / DSM 13 / JCM 2505 / CCUG 7422 / NBRC 12200 / NCIMB 9375 / NCTC 10341 / NRRL NRS-1264 / Gibson 46).